We begin with the raw amino-acid sequence, 471 residues long: Venom prothrombin activator vestarin-D2 (471 aa).

Positions Met1–Ala20 are cleaved as a signal peptide. Residues Glu21 to Arg40 constitute a propeptide that is removed on maturation. The Gla domain occupies Ala41–Asp86. Glu46, Glu47, Glu54, Glu56, Glu59, Glu60, Glu65, Glu66, Glu69, and Glu75 each carry 4-carboxyglutamate. A disulfide bond links Cys57 and Cys62. An EGF-like 1; calcium-binding domain is found at Asp86–Glu122. 10 cysteine pairs are disulfide-bonded: Cys90-Cys101, Cys95-Cys110, Cys112-Cys121, Cys129-Cys140, Cys136-Cys149, Cys151-Cys164, Cys172-Cys333, Cys233-Cys238, Cys381-Cys395, and Cys406-Cys434. O-linked (Hex...) serine glycosylation occurs at Ser92. Residues Cys129–Cys164 enclose the EGF-like 2 domain. Residues Arg182–Arg226 constitute a propeptide, activation peptide. The Peptidase S1 domain occupies Ile227 to Arg458. The Charge relay system role is filled by His268. Residue Asn271 is glycosylated (N-linked (GlcNAc...) asparagine). The Charge relay system role is filled by Asp313. Ser410 functions as the Charge relay system in the catalytic mechanism.

Belongs to the peptidase S1 family. Snake venom subfamily. Heterodimer of a light chain and a heavy chain; disulfide-linked. The vitamin K-dependent, enzymatic carboxylation of some glutamate residues allows the modified protein to bind calcium. Expressed by the venom gland.

It localises to the secreted. It catalyses the reaction Selective cleavage of Arg-|-Thr and then Arg-|-Ile bonds in prothrombin to form thrombin.. Functionally, snake prothrombin activator that attacks the hemostatic system of prey. This protein is functionally similar to blood coagulation factor Xa. The sequence is that of Venom prothrombin activator vestarin-D2 from Demansia vestigiata (Lesser black whip snake).